Consider the following 429-residue polypeptide: MEKLLIEGGRALNGTIRVSGAKNSAVALIPTTILADTPVTIGGVPNISDVKMLGDLLEEIGGKVTYGQEEEMVVDPSNMVAMPLPNGKVKKLRASYYLMGAMLGRFKKAVIGLPGGCHLGPRPIDQHIKGFEALGAHVTNEQGAIYLRADELRGARIYLDVVSVGATINIMLAAVRAKGRTVIENAAKEPEIIDVATLLTSMGARIKGAGTDVIRIDGVDSLHGCHHTIIPDRIEAGTYMILGAASGGEVTVDNVIPQHLESVTAKLREAGVQVETNDDQITVNGNRKLKVVDIKTLVYPGFPTDLQQPFTTLLTKAHGTGVVTDTIYGARFKHIDELRRMNAQIKVEGRSAIVTGPVLLQGAKVKASDLRAGAALVIAGLMADGITEVTGLEHIDRGYENIVDKLKGLGANIWREQMTKQEIEEMKNA.

Position 22–23 (22–23) interacts with phosphoenolpyruvate; that stretch reads KN. Arg-93 provides a ligand contact to UDP-N-acetyl-alpha-D-glucosamine. The active-site Proton donor is Cys-117. Cys-117 carries the 2-(S-cysteinyl)pyruvic acid O-phosphothioketal modification. UDP-N-acetyl-alpha-D-glucosamine is bound by residues 122-126, Asp-305, and Ile-327; that span reads RPIDQ.

Belongs to the EPSP synthase family. MurA subfamily.

It is found in the cytoplasm. The enzyme catalyses phosphoenolpyruvate + UDP-N-acetyl-alpha-D-glucosamine = UDP-N-acetyl-3-O-(1-carboxyvinyl)-alpha-D-glucosamine + phosphate. It participates in cell wall biogenesis; peptidoglycan biosynthesis. In terms of biological role, cell wall formation. Adds enolpyruvyl to UDP-N-acetylglucosamine. In Bacillus cereus (strain ATCC 14579 / DSM 31 / CCUG 7414 / JCM 2152 / NBRC 15305 / NCIMB 9373 / NCTC 2599 / NRRL B-3711), this protein is UDP-N-acetylglucosamine 1-carboxyvinyltransferase 2.